Reading from the N-terminus, the 422-residue chain is 3-phosphoshikimate 1-carboxyvinyltransferase (422 aa).

Residues Lys20, Ser21, and Arg25 each contribute to the 3-phosphoshikimate site. Residue Lys20 coordinates phosphoenolpyruvate. Residues Gly92 and Arg120 each coordinate phosphoenolpyruvate. 3-phosphoshikimate-binding residues include Ser163, Ser164, Gln165, Ser191, Asp304, and Lys331. Gln165 serves as a coordination point for phosphoenolpyruvate. The active-site Proton acceptor is the Asp304. Residues Arg335 and Arg377 each coordinate phosphoenolpyruvate.

It belongs to the EPSP synthase family. As to quaternary structure, monomer.

The protein resides in the cytoplasm. The enzyme catalyses 3-phosphoshikimate + phosphoenolpyruvate = 5-O-(1-carboxyvinyl)-3-phosphoshikimate + phosphate. Its pathway is metabolic intermediate biosynthesis; chorismate biosynthesis. Its function is as follows. Catalyzes the transfer of the enolpyruvyl moiety of phosphoenolpyruvate (PEP) to the 5-hydroxyl of shikimate-3-phosphate (S3P) to produce enolpyruvyl shikimate-3-phosphate and inorganic phosphate. This chain is 3-phosphoshikimate 1-carboxyvinyltransferase, found in Methanocorpusculum labreanum (strain ATCC 43576 / DSM 4855 / Z).